Here is a 576-residue protein sequence, read N- to C-terminus: Pentatricopeptide repeat-containing protein At1g79080, chloroplastic (576 aa).

Residues 1 to 37 constitute a chloroplast transit peptide; sequence MSTLLNSVLSMASPESSPRKAVGFVSHIPSGFLHFSS. PPR repeat units lie at residues 105 to 139, 140 to 174, 175 to 209, 210 to 244, 245 to 279, 280 to 314, 315 to 349, 352 to 386, 387 to 417, 422 to 456, 457 to 487, 493 to 527, and 528 to 562; these read NVAHSTQLLYDLCKANRLKKAIRVIELMVSSGIIP, DASAYTYLVNQLCKRGNVGYAMQLVEKMEDHGYPS, NTVTYNALVRGLCMLGSLNQSLQFVERLMQKGLAP, NAFTYSFLLEAAYKERGTDEAVKLLDEIIVKGGEP, NLVSYNVLLTGFCKEGRTDDAMALFRELPAKGFKA, NVVSYNILLRCLCCDGRWEEANSLLAEMDGGDRAP, SVVTYNILINSLAFHGRTEQALQVLKEMSKGNHQF, TATSYNPVIARLCKEGKVDLVVKCLDEMIYRRCKP, NEGTYNAIGSLCEHNSKVQEAFYIIQSLSNK, THDFYKSVITSLCRKGNTFAAFQLLYEMTRCGFDP, DAHTYSALIRGLCLEGMFTGAMEVLSIMEES, TVDNFNAMILGLCKIRRTDLAMEVFEMMVEKKRMP, and NETTYAILVEGIAHEDELELAKEVLDELRLRKVIG.

It belongs to the PPR family. P subfamily.

Its subcellular location is the plastid. The protein localises to the chloroplast. In Arabidopsis thaliana (Mouse-ear cress), this protein is Pentatricopeptide repeat-containing protein At1g79080, chloroplastic.